We begin with the raw amino-acid sequence, 214 residues long: Phosphoenolpyruvate guanylyltransferase (214 aa).

Residues threonine 139, glycine 155, and serine 158 each coordinate phosphoenolpyruvate.

This sequence belongs to the CofC family.

It catalyses the reaction phosphoenolpyruvate + GTP + H(+) = enolpyruvoyl-2-diphospho-5'-guanosine + diphosphate. It functions in the pathway cofactor biosynthesis; coenzyme F420 biosynthesis. Functionally, guanylyltransferase that catalyzes the activation of phosphoenolpyruvate (PEP) as enolpyruvoyl-2-diphospho-5'-guanosine, via the condensation of PEP with GTP. It is involved in the biosynthesis of coenzyme F420, a hydride carrier cofactor. This chain is Phosphoenolpyruvate guanylyltransferase, found in Salinispora arenicola (strain CNS-205).